An 833-amino-acid chain; its full sequence is DNA polymerase I, thermostable (833 aa).

The 95-residue stretch at 173-267 (VPPERWVDFR…FKALRRRTPD (95 aa)) folds into the 5'-3' exonuclease domain. Residues 412-833 (ERLFQNLFPR…GRDWLEAKQD (422 aa)) form a polymerase region.

This sequence belongs to the DNA polymerase type-A family.

The catalysed reaction is DNA(n) + a 2'-deoxyribonucleoside 5'-triphosphate = DNA(n+1) + diphosphate. In terms of biological role, in addition to polymerase activity, this DNA polymerase exhibits 5'-3' exonuclease activity. Unlikely to have 3'-5' exonuclease activity due to absence of a 3'-5' exonuclease domain. The chain is DNA polymerase I, thermostable (polA) from Thermus filiformis.